The sequence spans 57 residues: Large ribosomal subunit protein bL32 (57 aa).

Over residues 1–19 the composition is skewed to basic residues; that stretch reads MAVPKRRMSRSNTRSRRSQ. The segment at 1–21 is disordered; that stretch reads MAVPKRRMSRSNTRSRRSQWK.

It belongs to the bacterial ribosomal protein bL32 family.

The protein is Large ribosomal subunit protein bL32 of Mycobacteroides abscessus (strain ATCC 19977 / DSM 44196 / CCUG 20993 / CIP 104536 / JCM 13569 / NCTC 13031 / TMC 1543 / L948) (Mycobacterium abscessus).